Here is a 293-residue protein sequence, read N- to C-terminus: MEIRRRPPNPKVKVANLEYAIPHEESEPRNILEKIVWEKDREVELARHRLPLPKLIAKIEKLSDTKNFLQTLKDSVTSPAVIAEIKKASPSRGLIREDFKPGDIAIAYQKGGATCLSVLTDKTFFQGGFDVLADVRKIIDIPLLCKDFILHPYQIYQARASGADAILLIAAILSDQDLMYLNKIALSLGLSILVEVHDAAELNRVLRLGGFPLIGINNRDLKTFETDLTTTCKVATECSNLLKEQDVLLVSESGIFTREDLQKVASFGASAVLIGESLMRQKDLTNALKELIG.

It belongs to the TrpC family.

It catalyses the reaction 1-(2-carboxyphenylamino)-1-deoxy-D-ribulose 5-phosphate + H(+) = (1S,2R)-1-C-(indol-3-yl)glycerol 3-phosphate + CO2 + H2O. Its pathway is amino-acid biosynthesis; L-tryptophan biosynthesis; L-tryptophan from chorismate: step 4/5. The polypeptide is Indole-3-glycerol phosphate synthase (Prochlorococcus marinus (strain SARG / CCMP1375 / SS120)).